We begin with the raw amino-acid sequence, 2620 residues long: Highly reducing polyketide synthase tazB (2620 aa).

Residues 1–22 (MPFLNGNTTHHEAHSAEPDHGN) are disordered. Residues 1–416 (MPFLNGNTTH…GTNAHCILDD (416 aa)) enclose the Ketosynthase family 3 (KS3) domain. The span at 9-22 (THHEAHSAEPDHGN) shows a compositional bias: basic and acidic residues. Active-site for beta-ketoacyl synthase activity residues include cysteine 166, histidine 301, and histidine 340. The segment at 460–481 (GFNKFDEPRGSDSAGSNANGSH) is disordered. Over residues 470-481 (SDSAGSNANGSH) the composition is skewed to low complexity. The tract at residues 601-923 (VFTGQGAQYA…PYLATLSRKD (323 aa)) is malonyl-CoA:ACP transacylase (MAT) domain. The interval 993 to 1128 (HDLFGAPVPD…GEVSPDLKKS (136 aa)) is N-terminal hotdog fold. Positions 993-1313 (HDLFGAPVPD…LAGIRLSPFK (321 aa)) are dehydratase (DH) domain. The region spanning 993-1318 (HDLFGAPVPD…LSPFKPESSE (326 aa)) is the PKS/mFAS DH domain. Histidine 1025 serves as the catalytic Proton acceptor; for dehydratase activity. The interval 1157–1318 (TAPVDFTPVY…LSPFKPESSE (162 aa)) is C-terminal hotdog fold. The active-site Proton donor; for dehydratase activity is the aspartate 1225. The tract at residues 1379–1680 (GLRESREMKD…VDFEASSSIY (302 aa)) is methyltransferase (CMet) domain. The tract at residues 1910-2227 (GIDSLTWVTD…TGKSIGKVTL (318 aa)) is enoyl reductase (ER) domain. The tract at residues 2251-2425 (SFILAGGLGG…HGASVNLGAV (175 aa)) is ketoreductase (KR) domain. One can recognise a Carrier domain in the interval 2539-2620 (EAARIIHKAL…VSLSSFTKFR (82 aa)). Serine 2576 is subject to O-(pantetheine 4'-phosphoryl)serine.

Its pathway is secondary metabolite biosynthesis. Its function is as follows. Highly reducing polyketide synthase; part of the gene cluster that mediates the biosynthesis of azaterrilone A and other azaphilones, a class of fungal metabolites characterized by a highly oxygenated pyrano-quinone bicyclic core and exhibiting a broad range of bioactivities. The first step of the pathway begins with the non-reducing polyketide synthase tazA that assembles one acetyl-CoA starter unit, five malonyl-CoA units, and catalyzes a series of Claisen condensations, methylation, PT-mediated cyclization, and finally releases the first hexaketide precursor through the R-domain. The tazA product then undergoes reduction on its terminal ketone and the following pyran-ring formation by yet undetermined enzyme(s). Dehydration and enoyl reduction, possibly involving the trans-enoyl reductase tazE leads to the next intermediate. TazD is predicted as an acetyltransferase and might catalyze the acetylation steps leading to the synthesis of azaterrilone A. Azaterrilone A is not the final product of the taz pathway and both the highly reducing polyketide synthase tazB and the dual enzyme tazHJ catalyze late steps of the pathway, leading to the production of the 2 final stereoisomers that contain additional polyketide modification whose structures have still to be determined. The polypeptide is Highly reducing polyketide synthase tazB (Aspergillus terreus (strain NIH 2624 / FGSC A1156)).